Here is a 74-residue protein sequence, read N- to C-terminus: Large ribosomal subunit protein bL31 (74 aa).

Residues Cys-16, Cys-18, Cys-38, and Cys-41 each contribute to the Zn(2+) site.

It belongs to the bacterial ribosomal protein bL31 family. Type A subfamily. As to quaternary structure, part of the 50S ribosomal subunit. It depends on Zn(2+) as a cofactor.

Its function is as follows. Binds the 23S rRNA. The sequence is that of Large ribosomal subunit protein bL31 from Mycolicibacterium vanbaalenii (strain DSM 7251 / JCM 13017 / BCRC 16820 / KCTC 9966 / NRRL B-24157 / PYR-1) (Mycobacterium vanbaalenii).